The chain runs to 388 residues: Putative pyridoxal phosphate-dependent aminotransferase EpsN (388 aa).

At Lys190 the chain carries N6-(pyridoxal phosphate)lysine.

It belongs to the DegT/DnrJ/EryC1 family. Pyridoxal 5'-phosphate is required as a cofactor.

In terms of biological role, may be involved in the production of the exopolysaccharide (EPS) component of the extracellular matrix during biofilm formation. EPS is responsible for the adhesion of chains of cells into bundles. In Bacillus subtilis (strain 168), this protein is Putative pyridoxal phosphate-dependent aminotransferase EpsN (epsN).